We begin with the raw amino-acid sequence, 454 residues long: Allantoinase (454 aa).

H60, H62, K147, H183, H239, and D312 together coordinate Zn(2+). K147 carries the N6-carboxylysine modification.

It belongs to the metallo-dependent hydrolases superfamily. Allantoinase family. Homotetramer. It depends on Zn(2+) as a cofactor. In terms of processing, carboxylation allows a single lysine to coordinate two zinc ions.

It catalyses the reaction (S)-allantoin + H2O = allantoate + H(+). It functions in the pathway nitrogen metabolism; (S)-allantoin degradation; allantoate from (S)-allantoin: step 1/1. Its function is as follows. Catalyzes the conversion of allantoin (5-ureidohydantoin) to allantoic acid by hydrolytic cleavage of the five-member hydantoin ring. The chain is Allantoinase from Rubrobacter xylanophilus (strain DSM 9941 / JCM 11954 / NBRC 16129 / PRD-1).